The following is a 429-amino-acid chain: Queuine tRNA-ribosyltransferase accessory subunit 2 (429 aa).

4 residues coordinate Zn(2+): Cys-330, Cys-332, Cys-335, and His-361.

Belongs to the queuine tRNA-ribosyltransferase family. QTRT2 subfamily. Heterodimer of a catalytic subunit and an accessory subunit. Zn(2+) serves as cofactor.

The protein localises to the cytoplasm. Its function is as follows. Non-catalytic subunit of the queuine tRNA-ribosyltransferase (TGT) that catalyzes the base-exchange of a guanine (G) residue with queuine (Q) at position 34 (anticodon wobble position) in tRNAs with GU(N) anticodons (tRNA-Asp, -Asn, -His and -Tyr), resulting in the hypermodified nucleoside queuosine (7-(((4,5-cis-dihydroxy-2-cyclopenten-1-yl)amino)methyl)-7-deazaguanosine). The polypeptide is Queuine tRNA-ribosyltransferase accessory subunit 2 (Culex quinquefasciatus (Southern house mosquito)).